The primary structure comprises 338 residues: MTQKKVAILGAGSWGTGLALVLADNNHKPVIWGNLDKIVNEINESHTNSHYLPDIILPTEVKATLSLDEAIDGAEIVVIAIPTNAMRIVCKQLNEALKEPTILVHVSKGIEPETNLRMSEVIEEEIDAAKRKALVVLSGPSHAEEVALRHPTTLCASCKDLTAAEIVQDRFINNNLRIYTNDDVIGAEIGGALKNIIALGAGISDGLGYGDNAKAALMTRGMAEITRLGVAVGSNPQTFYGLTGIGDLIVTCTSVHSRNWRAGNMLGKGENLDEVLEKMGMVVEGVRTAKAVHGWAKKLDIDMPITESIYAILFENKDAREAVDLLMGRKKKIEKESF.

Residues serine 13, tryptophan 14, and lysine 108 each coordinate NADPH. Sn-glycerol 3-phosphate-binding residues include lysine 108, glycine 139, and serine 141. Residue alanine 143 coordinates NADPH. Sn-glycerol 3-phosphate-binding residues include lysine 194, aspartate 247, serine 257, arginine 258, and asparagine 259. Catalysis depends on lysine 194, which acts as the Proton acceptor. Residue arginine 258 coordinates NADPH. NADPH contacts are provided by valine 282 and glutamate 284.

The protein belongs to the NAD-dependent glycerol-3-phosphate dehydrogenase family.

It is found in the cytoplasm. The catalysed reaction is sn-glycerol 3-phosphate + NAD(+) = dihydroxyacetone phosphate + NADH + H(+). The enzyme catalyses sn-glycerol 3-phosphate + NADP(+) = dihydroxyacetone phosphate + NADPH + H(+). It participates in membrane lipid metabolism; glycerophospholipid metabolism. Functionally, catalyzes the reduction of the glycolytic intermediate dihydroxyacetone phosphate (DHAP) to sn-glycerol 3-phosphate (G3P), the key precursor for phospholipid synthesis. This chain is Glycerol-3-phosphate dehydrogenase [NAD(P)+], found in Listeria monocytogenes serotype 4a (strain HCC23).